Reading from the N-terminus, the 487-residue chain is Ribosomal protein uS12 methylthiotransferase RimO (487 aa).

Residues 38-149 form the MTTase N-terminal domain; it reads PTVAFAHLGC…IVEVLEQVEA (112 aa). [4Fe-4S] cluster is bound by residues cysteine 47, cysteine 83, cysteine 112, cysteine 187, cysteine 191, and cysteine 194. The Radical SAM core domain maps to 173–402; it reads TTSEAVAYLK…MEAQQAISAE (230 aa). The TRAM domain occupies 405–476; it reads GAWVGRIVDV…IYDLEGEVVG (72 aa).

It belongs to the methylthiotransferase family. RimO subfamily. It depends on [4Fe-4S] cluster as a cofactor.

It is found in the cytoplasm. The enzyme catalyses L-aspartate(89)-[ribosomal protein uS12]-hydrogen + (sulfur carrier)-SH + AH2 + 2 S-adenosyl-L-methionine = 3-methylsulfanyl-L-aspartate(89)-[ribosomal protein uS12]-hydrogen + (sulfur carrier)-H + 5'-deoxyadenosine + L-methionine + A + S-adenosyl-L-homocysteine + 2 H(+). Catalyzes the methylthiolation of an aspartic acid residue of ribosomal protein uS12. This chain is Ribosomal protein uS12 methylthiotransferase RimO, found in Synechococcus sp. (strain RCC307).